Here is a 217-residue protein sequence, read N- to C-terminus: UPF0502 protein KPN78578_10500 (217 aa).

The protein belongs to the UPF0502 family.

This chain is UPF0502 protein KPN78578_10500, found in Klebsiella pneumoniae subsp. pneumoniae (strain ATCC 700721 / MGH 78578).